The chain runs to 455 residues: Ribulose bisphosphate carboxylase large chain (455 aa).

K5 is modified (N6,N6,N6-trimethyllysine). Substrate-binding residues include N114 and T164. K166 acts as the Proton acceptor in catalysis. K168 contributes to the substrate binding site. Residues K192, D194, and E195 each contribute to the Mg(2+) site. K192 carries the post-translational modification N6-carboxylysine. The active-site Proton acceptor is H285. Positions 286, 318, and 370 each coordinate substrate.

Belongs to the RuBisCO large chain family. Type I subfamily. As to quaternary structure, heterohexadecamer of 8 large chains and 8 small chains; disulfide-linked. The disulfide link is formed within the large subunit homodimers. It depends on Mg(2+) as a cofactor. In terms of processing, the disulfide bond which can form in the large chain dimeric partners within the hexadecamer appears to be associated with oxidative stress and protein turnover.

The protein localises to the plastid. Its subcellular location is the chloroplast. The enzyme catalyses 2 (2R)-3-phosphoglycerate + 2 H(+) = D-ribulose 1,5-bisphosphate + CO2 + H2O. The catalysed reaction is D-ribulose 1,5-bisphosphate + O2 = 2-phosphoglycolate + (2R)-3-phosphoglycerate + 2 H(+). Functionally, ruBisCO catalyzes two reactions: the carboxylation of D-ribulose 1,5-bisphosphate, the primary event in carbon dioxide fixation, as well as the oxidative fragmentation of the pentose substrate in the photorespiration process. Both reactions occur simultaneously and in competition at the same active site. This chain is Ribulose bisphosphate carboxylase large chain, found in Lupinus microcarpus (Chick lupine).